The chain runs to 322 residues: Malate dehydrogenase (322 aa).

NAD(+) is bound by residues 10-15 and Asp-34; that span reads GSGQIG. Residues Arg-83 and Arg-89 each contribute to the substrate site. Residues Asn-96 and 119 to 121 each bind NAD(+); that span reads ITN. Asn-121 and Arg-152 together coordinate substrate. The active-site Proton acceptor is the His-176.

The protein belongs to the LDH/MDH superfamily. MDH type 3 family.

It catalyses the reaction (S)-malate + NAD(+) = oxaloacetate + NADH + H(+). Catalyzes the reversible oxidation of malate to oxaloacetate. This chain is Malate dehydrogenase, found in Nitrobacter winogradskyi (strain ATCC 25391 / DSM 10237 / CIP 104748 / NCIMB 11846 / Nb-255).